Consider the following 574-residue polypeptide: MYAPPFVRAFGIAVLAVLPSFSSPATAASLKSSGSSSSCRCFPGDACWPSPADWKAFNQSVGGRLIATVPLGSVCHGTTYDAARCADVKAAWPYADTHTDSSSSVLAPFFANQSCDPFLPRETPCVIGTYVQYAVNVSSVADIQKTLAFSQKKNLRLVVRNTGHDYFGKSTGAGGLGLWMHNLKTYDIHDYKSAAYTGKAVTMGAGIQAGESAATAFKQGLTIVSGICPTVGLAGGYTQGGGLGPLTTRYGLGADQVLEWHAVLANGSEITATPTKNSDLYWALTGGGGGTYAVVYSMTVKAHANEKTTGANLTFPNAGSEDVFFQGVQAFHDIIPAISDAGGTAVWTVLSKALSVGPVTGPNMTKATMDSIFQPVLQKLDALNITYSYSSGEFSSFYESNAAYDPPVVSNGLQIGGRLVKRSDFTGNPDGFIQAIRGIADQGGLVTGASYQLSSSLQHPPNSVNPELRKSLISFQIGVPWINTDWATDLHNQDLITNSFVPALAALLPSGGSAYLNQADFREPGWQQVFYGENYEKLLELKDVYDPNGVFWGRTTVGSERWAETEDKRLCRVS.

A signal peptide spans 1–27 (MYAPPFVRAFGIAVLAVLPSFSSPATA). N-linked (GlcNAc...) asparagine glycans are attached at residues Asn-58, Asn-112, Asn-136, Asn-266, Asn-312, Asn-363, and Asn-384. In terms of domain architecture, FAD-binding PCMH-type spans 126 to 305 (VIGTYVQYAV…YSMTVKAHAN (180 aa)).

This sequence belongs to the oxygen-dependent FAD-linked oxidoreductase family. FAD is required as a cofactor.

Its pathway is secondary metabolite biosynthesis. Functionally, FAD-linked oxidoreductase; part of the SOR gene cluster that mediates the biosynthesis of sorbicillinoids, a diverse group of yellow secondary metabolites that restrict growth of competing pathogenic fungi but not of bacteria. Sorbicillinoids biosynthesis requires the action of two PKSs. The SOR cluster is required for the production of trichodimerol and dihydrotrichotetronin, with sor2 being sufficient for production of trichodimerol, but not dihydrotrichotetronin in the light. Sor1 iteratively combines three acetyl units and the growing chain is modified by the ketoacyl reductase subunit, and optional by the enoyl reductase subunit in the second cycle. The polyketide is then handed over to the PKS sor2, which adds three more acetyl units, and two methyl groups. Sor2 releases an aldehyde, which undergoes spontaneous cyclization resulting in the formation of sorbicillin or 2',3'-dihydrosorbicillin. The monooxygenase sor5 oxidizes sorbicillin and 2',3'-dihydrosorbicillin to 2',3'-dihydrosorbicillinol and sorbicillinol, respectively. The oxidoreductase sor8 further converts sorbicillinol into oxosorbicillinol. Sorbicillinol is the building block for the other sorbicillinoids such as disorbicillinol, bisvertinolon, dihydrobisvertinolone, and dihydrotrichotetronine. This Hypocrea jecorina (strain QM6a) (Trichoderma reesei) protein is FAD-linked oxidoreductase sor8.